An 841-amino-acid chain; its full sequence is Rho guanine nucleotide exchange factor 15 (841 aa).

Disordered regions lie at residues 1–179 (MSAQ…QARA), 239–261 (RRASPLRTSRSRPHPPSIGHPAV), and 279–333 (KPPK…REEE). Polar residues predominate over residues 39-53 (NGSSPQELPRNSNDA). Positions 65–110 (PPAASLKPPALLPPSASRASLDSQTSPDSPSSTPTPSPVSRRSASP) are enriched in low complexity. 2 positions are modified to phosphoserine: serine 107 and serine 109. The span at 111 to 124 (EPAPRSPVPPPKPS) shows a compositional bias: pro residues. Residue tyrosine 353 is modified to Phosphotyrosine; by EPHB2. Residues 417 to 601 (RMQESLFEVV…SKIIERCSAE (185 aa)) enclose the DH domain. The interval 765–793 (ESSAPAKTEGRSLESRAAPKHLHKTPEGW) is disordered.

In terms of assembly, interacts with EPHB2. Interacts with EPHA4. In terms of processing, phosphorylated on tyrosine residues upon EFNA1 stimulation. EPHB2-dependent phosphorylation at Tyr-353 triggers UBE3A-mediated ubiquitination. Post-translationally, ubiquitinated; UBE3A-mediated ubiquitination and degradation by the proteasome promotes EFNB1-dependent synapse formation. In terms of tissue distribution, expressed in the vascular smooth muscle of coronary artery.

It localises to the cell projection. Its subcellular location is the dendrite. In terms of biological role, specific GEF for RhoA activation. Does not activate RAC1 or CDC42. Regulates vascular smooth muscle contractility. Negatively regulates excitatory synapse development by suppressing the synapse-promoting activity of EPHB2. This chain is Rho guanine nucleotide exchange factor 15 (ARHGEF15), found in Homo sapiens (Human).